We begin with the raw amino-acid sequence, 249 residues long: 2,3-bisphosphoglycerate-dependent phosphoglycerate mutase (249 aa).

Substrate contacts are provided by residues 9–16 (RHGESEWN), 22–23 (TG), Arg61, 88–91 (ERHY), Lys99, 115–116 (RR), and 184–185 (GN). The active-site Tele-phosphohistidine intermediate is the His10. Residue Glu88 is the Proton donor/acceptor of the active site.

The protein belongs to the phosphoglycerate mutase family. BPG-dependent PGAM subfamily.

The catalysed reaction is (2R)-2-phosphoglycerate = (2R)-3-phosphoglycerate. Its pathway is carbohydrate degradation; glycolysis; pyruvate from D-glyceraldehyde 3-phosphate: step 3/5. In terms of biological role, catalyzes the interconversion of 2-phosphoglycerate and 3-phosphoglycerate. This Cutibacterium acnes (strain DSM 16379 / KPA171202) (Propionibacterium acnes) protein is 2,3-bisphosphoglycerate-dependent phosphoglycerate mutase.